We begin with the raw amino-acid sequence, 302 residues long: Pathogenicity locus probable regulatory protein HrpS (302 aa).

The Sigma-54 factor interaction domain occupies 9 to 237 (DDLDAERVPN…LKAAAKRHVL (229 aa)). ATP is bound by residues 37–44 (GETGTGKD) and 99–108 (AQGGTLYLDE). The segment at residues 279 to 298 (IDAASLELDIPRRTLYRRIK) is a DNA-binding region (H-T-H motif).

Its function is as follows. Regulates the activation of the sigma factor HrpL which itself induces the expression of hprD as well as other hrp loci which are involved in plant pathogenicity, hrmA and avr genes. Probably interacts with sigma-54. The chain is Pathogenicity locus probable regulatory protein HrpS (hrpS) from Pseudomonas syringae pv. syringae.